A 561-amino-acid chain; its full sequence is Proline--tRNA ligase (561 aa).

It belongs to the class-II aminoacyl-tRNA synthetase family. ProS type 1 subfamily. As to quaternary structure, homodimer.

It is found in the cytoplasm. It carries out the reaction tRNA(Pro) + L-proline + ATP = L-prolyl-tRNA(Pro) + AMP + diphosphate. Catalyzes the attachment of proline to tRNA(Pro) in a two-step reaction: proline is first activated by ATP to form Pro-AMP and then transferred to the acceptor end of tRNA(Pro). As ProRS can inadvertently accommodate and process non-cognate amino acids such as alanine and cysteine, to avoid such errors it has two additional distinct editing activities against alanine. One activity is designated as 'pretransfer' editing and involves the tRNA(Pro)-independent hydrolysis of activated Ala-AMP. The other activity is designated 'posttransfer' editing and involves deacylation of mischarged Ala-tRNA(Pro). The misacylated Cys-tRNA(Pro) is not edited by ProRS. This is Proline--tRNA ligase from Thermosipho africanus (strain TCF52B).